The following is a 942-amino-acid chain: DDB1- and CUL4-associated factor 5 (942 aa).

WD repeat units lie at residues 51–91 (GHFG…HSRV), 99–139 (EHHS…LDVF), 140–180 (AHED…HGEP), 185–225 (NYPS…SSLL), 277–317 (FNSC…EAGG), and 331–370 (GHRSIVNQVRFNPHTYMICSSGVEKIIKIWSPYKQPGCTG). Disordered stretches follow at residues 449–478 (GVSERSGYTDSESSASLPRSPPPTVDESAD) and 490–509 (TTNTVASTPPTPTCEDAASR). Residues 454–465 (SGYTDSESSASL) are compositionally biased toward polar residues. Threonine 500 is modified (phosphothreonine). Phosphoserine is present on residues serine 531, serine 533, serine 626, serine 628, serine 645, serine 648, and serine 651. Disordered regions lie at residues 544–655 (TDLF…DIES), 676–824 (NNKD…EERS), and 889–942 (ACET…KLKT). Positions 625–641 (LSSSPTSSPERSTSTLE) are enriched in low complexity. Composition is skewed to basic and acidic residues over residues 690–701 (DEGRAGTSHKDN) and 728–738 (CSKDTFKEETP). Over residues 760–770 (GTSQDTGNSGS) the composition is skewed to polar residues. Serine 794 bears the Phosphoserine mark. Residues 801 to 815 (SGSTLNSGSGNCPRT) are compositionally biased toward polar residues.

In terms of assembly, interacts with DDB1, CUL4A or CUL4B. Interacts with L3MBTL3. Interacts with DNMT1. Interacts with E2F1. Interacts with SOX2. As to expression, ubiquitous.

It functions in the pathway protein modification; protein ubiquitination. Functionally, is a substrate receptor for the CUL4-DDB1 E3 ubiquitin-protein ligase complex (CRL4). The complex CRL4-DCAF5 is involved in the ubiquitination of a set of methylated non-histone proteins, including SOX2, DNMT1 and E2F1. This Homo sapiens (Human) protein is DDB1- and CUL4-associated factor 5 (DCAF5).